The following is a 194-amino-acid chain: MHNNENVSGISAYLLGLIIGDGGLYKLKYKGNRSEYRVVITQKSENLIKQHIAPLMQFLIDELNVKSKIQIVKGDTRYELRVSSKKLYYYFANMLERIRLFNMREQIAFIKGLYVAEGDKTLKRLRIWNKNKALLEIVSRWLNNLGVRNTIHLDDHRHGVYVLNISLRDRIKFVHTILSSHLNPLPPERAGGYT.

The region spanning 14–147 (LLGLIIGDGG…VSRWLNNLGV (134 aa)) is the DOD-type homing endonuclease domain. Residues D21 and E117 contribute to the active site.

It depends on a divalent metal cation as a cofactor.

Endonuclease involved in intron homing. Recognizes DNA in the 23S rRNA gene intron (minimally 5'-CCGGGTAAGTTCCGG-3'), cutting after A-8 on the top and C-11 on the bottom strand. Has a slow turnover rate, cuts the coding strand with a slight preference over the non-coding strand. This chain is Homing endonuclease I-DmoI, found in Desulfurococcus mucosus (Desulfurococcus mobilis).